Here is a 152-residue protein sequence, read N- to C-terminus: Transcriptional regulator MraZ (152 aa).

SpoVT-AbrB domains follow at residues 5–52 (ASAI…PIHE) and 81–124 (AHEV…DEQS).

Belongs to the MraZ family. In terms of assembly, forms oligomers.

The protein localises to the cytoplasm. The protein resides in the nucleoid. The polypeptide is Transcriptional regulator MraZ (Shewanella baltica (strain OS223)).